A 177-amino-acid chain; its full sequence is Alkyl hydroperoxide reductase AhpD (177 aa).

Catalysis depends on C133, which acts as the Proton donor. The cysteines at positions 133 and 136 are disulfide-linked. C136 (cysteine sulfenic acid (-SOH) intermediate) is an active-site residue.

This sequence belongs to the AhpD family.

The catalysed reaction is N(6)-[(R)-dihydrolipoyl]-L-lysyl-[lipoyl-carrier protein] + a hydroperoxide = N(6)-[(R)-lipoyl]-L-lysyl-[lipoyl-carrier protein] + an alcohol + H2O. Its function is as follows. Antioxidant protein with alkyl hydroperoxidase activity. Required for the reduction of the AhpC active site cysteine residues and for the regeneration of the AhpC enzyme activity. The sequence is that of Alkyl hydroperoxide reductase AhpD from Coxiella burnetii (strain CbuG_Q212) (Coxiella burnetii (strain Q212)).